Here is a 276-residue protein sequence, read N- to C-terminus: MPWHARLQLNYTREHARTVARFEHHGPLRVLQSLYPEGGGICHNVLVHPPGGLVGGDQLDIRASVGPGAHALITSAGATRFYRSMGAPVLQRTCLSLAPGARLEWLPLEALCYNACNAENRLTLTLAPGAECMGADVTALGLPHAGQPFVAGRFVQHIEIPGLWREHGVIDATDQRLLRSPLGLAGHCCMASLFFGAGSALSQARRDSALDAARAVIDAHALKTTAGATSPCDQVLVLRLLAPQVEPAMQLLRQVRAAWRAALWQLDAEPPRIWAM.

This sequence belongs to the UreD family. In terms of assembly, ureD, UreF and UreG form a complex that acts as a GTP-hydrolysis-dependent molecular chaperone, activating the urease apoprotein by helping to assemble the nickel containing metallocenter of UreC. The UreE protein probably delivers the nickel.

It is found in the cytoplasm. In terms of biological role, required for maturation of urease via the functional incorporation of the urease nickel metallocenter. This is Urease accessory protein UreD from Verminephrobacter eiseniae (strain EF01-2).